Here is a 212-residue protein sequence, read N- to C-terminus: Uridine kinase (212 aa).

12-19 (GGSGGGKT) is a binding site for ATP.

It belongs to the uridine kinase family.

The protein localises to the cytoplasm. It carries out the reaction uridine + ATP = UMP + ADP + H(+). It catalyses the reaction cytidine + ATP = CMP + ADP + H(+). The protein operates within pyrimidine metabolism; CTP biosynthesis via salvage pathway; CTP from cytidine: step 1/3. It participates in pyrimidine metabolism; UMP biosynthesis via salvage pathway; UMP from uridine: step 1/1. The protein is Uridine kinase of Streptococcus pneumoniae serotype 19F (strain G54).